The primary structure comprises 345 residues: Putative [LysW]-L-2-aminoadipate/[LysW]-L-glutamate phosphate reductase (345 aa).

NADP(+) is bound at residue 11–14 (SGFT). The segment at 34–56 (TSRSKENKTIGHSHPNLRHSDLR) is disordered. The active site involves Cys146. Asn309 serves as a coordination point for NADP(+).

The protein belongs to the NAGSA dehydrogenase family. Type 1 subfamily. LysY sub-subfamily.

It localises to the cytoplasm. It carries out the reaction [amino-group carrier protein]-C-terminal-N-(1-carboxy-5-oxopentan-1-yl)-L-glutamine + phosphate + NADP(+) = [amino-group carrier protein]-C-terminal-N-(1-carboxy-5-phosphooxy-5-oxopentan-1-yl)-L-glutamine + NADPH + H(+). The catalysed reaction is [amino-group carrier protein]-C-terminal-gamma-(L-glutamyl-5-semialdehyde)-L-glutamate + phosphate + NADP(+) = [amino-group carrier protein]-C-terminal-gamma-(5-phospho-L-glutamyl)-L-glutamate + NADPH + H(+). Its pathway is amino-acid biosynthesis; L-lysine biosynthesis via AAA pathway; L-lysine from L-alpha-aminoadipate (Thermus route): step 3/5. It participates in amino-acid biosynthesis; L-arginine biosynthesis. In terms of biological role, involved in both the arginine and lysine biosynthetic pathways. This is Putative [LysW]-L-2-aminoadipate/[LysW]-L-glutamate phosphate reductase from Haloarcula marismortui (strain ATCC 43049 / DSM 3752 / JCM 8966 / VKM B-1809) (Halobacterium marismortui).